A 250-amino-acid polypeptide reads, in one-letter code: Leucyl/phenylalanyl-tRNA--protein transferase (250 aa).

This sequence belongs to the L/F-transferase family.

The protein localises to the cytoplasm. It catalyses the reaction N-terminal L-lysyl-[protein] + L-leucyl-tRNA(Leu) = N-terminal L-leucyl-L-lysyl-[protein] + tRNA(Leu) + H(+). The catalysed reaction is N-terminal L-arginyl-[protein] + L-leucyl-tRNA(Leu) = N-terminal L-leucyl-L-arginyl-[protein] + tRNA(Leu) + H(+). It carries out the reaction L-phenylalanyl-tRNA(Phe) + an N-terminal L-alpha-aminoacyl-[protein] = an N-terminal L-phenylalanyl-L-alpha-aminoacyl-[protein] + tRNA(Phe). Functions in the N-end rule pathway of protein degradation where it conjugates Leu, Phe and, less efficiently, Met from aminoacyl-tRNAs to the N-termini of proteins containing an N-terminal arginine or lysine. The protein is Leucyl/phenylalanyl-tRNA--protein transferase of Bordetella avium (strain 197N).